Reading from the N-terminus, the 273-residue chain is Kit ligand (273 aa).

The N-terminal stretch at 1–25 (MKKTQTWIITCIYLQLLLFNPLVKT) is a signal peptide. At 26–214 (KEICGNPVTD…AKAPEDSGLQ (189 aa)) the chain is on the extracellular side. 2 disulfides stabilise this stretch: Cys29-Cys114 and Cys68-Cys163. N-linked (GlcNAc...) asparagine glycans are attached at residues Asn90, Asn97, Asn145, and Asn195. The disordered stretch occupies residues 190 to 210 (ASSLRNDSSSSNRKAAKAPED). The segment covering 191 to 202 (SSLRNDSSSSNR) has biased composition (low complexity). The helical transmembrane segment at 215–237 (WTAMALPALISLVIGFAFGALYW) threads the bilayer. Residues 238–273 (KKKQSSLTRAVENIQINEEDNEISMLQQKEREFQEV) lie on the Cytoplasmic side of the membrane.

This sequence belongs to the SCF family. Homodimer, non-covalently linked. Heterotetramer with KIT, binding two KIT molecules; thereby mediates KIT dimerization and subsequent activation by autophosphorylation. A soluble form is produced by proteolytic processing of isoform 1 in the extracellular domain. In terms of tissue distribution, expressed in the cochlea.

Its subcellular location is the cell membrane. It is found in the cytoplasm. The protein localises to the cytoskeleton. The protein resides in the cell projection. It localises to the lamellipodium. Its subcellular location is the filopodium. It is found in the secreted. In terms of biological role, ligand for the receptor-type protein-tyrosine kinase KIT. Plays an essential role in the regulation of cell survival and proliferation, hematopoiesis, stem cell maintenance, gametogenesis, mast cell development, migration and function, and in melanogenesis. KITLG/SCF binding can activate several signaling pathways. Promotes phosphorylation of PIK3R1, the regulatory subunit of phosphatidylinositol 3-kinase, and subsequent activation of the kinase AKT1. KITLG/SCF and KIT also transmit signals via GRB2 and activation of RAS, RAF1 and the MAP kinases MAPK1/ERK2 and/or MAPK3/ERK1. KITLG/SCF and KIT promote activation of STAT family members STAT1, STAT3 and STAT5. KITLG/SCF and KIT promote activation of PLCG1, leading to the production of the cellular signaling molecules diacylglycerol and inositol 1,4,5-trisphosphate. KITLG/SCF acts synergistically with other cytokines, probably interleukins. This chain is Kit ligand (Kitlg), found in Mus musculus (Mouse).